Reading from the N-terminus, the 168-residue chain is Probable acetolactate synthase small subunit (168 aa).

One can recognise an ACT domain in the interval 10 to 84 (IISALVEHKP…DVIKVRDLEP (75 aa)).

This sequence belongs to the acetolactate synthase small subunit family. Dimer of large and small chains.

The catalysed reaction is 2 pyruvate + H(+) = (2S)-2-acetolactate + CO2. Its pathway is amino-acid biosynthesis; L-isoleucine biosynthesis; L-isoleucine from 2-oxobutanoate: step 1/4. It participates in amino-acid biosynthesis; L-valine biosynthesis; L-valine from pyruvate: step 1/4. The chain is Probable acetolactate synthase small subunit (ilvH) from Methanothermobacter thermautotrophicus (strain ATCC 29096 / DSM 1053 / JCM 10044 / NBRC 100330 / Delta H) (Methanobacterium thermoautotrophicum).